The chain runs to 208 residues: MALVTKLLVASRNWKKLAELRRVLDNAGLSGLTLVSLNDVVPFDEAPEAGATFEDNALAKARDAFAATGLASVADDSGLEAAALGGMPGVLSARWSGSYGDDAGNTALLLAQLCDVPDERRSAAFVSACALVSESDEVVVRGVWPGTIAREPRGYGGFGYDSIFIPDGPGLGGRTVAQLRPAEKDAFSHRFRALTLLMPALRVLAMRT.

Substrate is bound at residue 11–16 (SRNWKK). Asp-76 acts as the Proton acceptor in catalysis. Mg(2+) is bound at residue Asp-76. Substrate-binding positions include Ser-77, 158–161 (FGYD), Lys-184, and 189–190 (HR).

It belongs to the HAM1 NTPase family. In terms of assembly, homodimer. Mg(2+) is required as a cofactor.

The enzyme catalyses XTP + H2O = XMP + diphosphate + H(+). It catalyses the reaction dITP + H2O = dIMP + diphosphate + H(+). The catalysed reaction is ITP + H2O = IMP + diphosphate + H(+). Its function is as follows. Pyrophosphatase that catalyzes the hydrolysis of nucleoside triphosphates to their monophosphate derivatives, with a high preference for the non-canonical purine nucleotides XTP (xanthosine triphosphate), dITP (deoxyinosine triphosphate) and ITP. Seems to function as a house-cleaning enzyme that removes non-canonical purine nucleotides from the nucleotide pool, thus preventing their incorporation into DNA/RNA and avoiding chromosomal lesions. This Mycobacterium leprae (strain TN) protein is dITP/XTP pyrophosphatase.